A 202-amino-acid polypeptide reads, in one-letter code: Secreted RxLR effector protein 93 (202 aa).

An N-terminal signal peptide occupies residues 1 to 16; sequence MRFYLTKLFAAAGALA. Positions 29–58 are disordered; the sequence is TPVSPLSRSSDHHQSDDSTQRRLRTLNGAD. Over residues 37–48 the composition is skewed to basic and acidic residues; that stretch reads SSDHHQSDDSTQ. The RxLR-dEER signature appears at 49 to 61; the sequence is RRLRTLNGADEER.

This sequence belongs to the RxLR effector family.

It is found in the secreted. The protein resides in the host nucleus. In terms of biological role, secreted effector that completely suppresses the host cell death induced by cell death-inducing proteins. In Plasmopara viticola (Downy mildew of grapevine), this protein is Secreted RxLR effector protein 93.